Reading from the N-terminus, the 286-residue chain is Small ribosomal subunit protein uS2 (286 aa).

The tract at residues 213–286 (EEQAQNNKWA…GAQEGGEWGS (74 aa)) is disordered. Low complexity predominate over residues 227-241 (SPALSAAVPSSAAPV). Residues 244–270 (WSSSPSKETTEWGASNTAAAAKSSWSN) show a composition bias toward polar residues. Residues 274–286 (GEWGAQEGGEWGS) are compositionally biased toward gly residues.

This sequence belongs to the universal ribosomal protein uS2 family. Component of the small ribosomal subunit. Mature ribosomes consist of a small (40S) and a large (60S) subunit. The 40S subunit contains about 33 different proteins and 1 molecule of RNA (18S). The 60S subunit contains about 49 different proteins and 3 molecules of RNA (28S, 5.8S and 5S). Interacts with ribosomal protein S21.

Its subcellular location is the cytoplasm. Required for the assembly and/or stability of the 40S ribosomal subunit. Required for the processing of the 20S rRNA-precursor to mature 18S rRNA in a late step of the maturation of 40S ribosomal subunits. This Trichoplax adhaerens (Trichoplax reptans) protein is Small ribosomal subunit protein uS2.